Consider the following 465-residue polypeptide: Tyrosine 3-monooxygenase (465 aa).

Fe cation contacts are provided by histidine 294, histidine 299, and glutamate 339.

The protein belongs to the biopterin-dependent aromatic amino acid hydroxylase family. Fe(2+) is required as a cofactor.

The protein resides in the cytoplasm. It localises to the perinuclear region. The enzyme catalyses (6R)-L-erythro-5,6,7,8-tetrahydrobiopterin + L-tyrosine + O2 = (4aS,6R)-4a-hydroxy-L-erythro-5,6,7,8-tetrahydrobiopterin + L-dopa. It participates in catecholamine biosynthesis; dopamine biosynthesis; dopamine from L-tyrosine: step 1/2. The sequence is that of Tyrosine 3-monooxygenase (TH) from Schistosoma mansoni (Blood fluke).